A 184-amino-acid polypeptide reads, in one-letter code: Peptidyl-tRNA hydrolase (184 aa).

Tyrosine 14 contacts tRNA. Catalysis depends on histidine 19, which acts as the Proton acceptor. TRNA-binding residues include phenylalanine 60 and asparagine 62.

This sequence belongs to the PTH family. In terms of assembly, monomer.

It is found in the cytoplasm. It catalyses the reaction an N-acyl-L-alpha-aminoacyl-tRNA + H2O = an N-acyl-L-amino acid + a tRNA + H(+). Functionally, hydrolyzes ribosome-free peptidyl-tRNAs (with 1 or more amino acids incorporated), which drop off the ribosome during protein synthesis, or as a result of ribosome stalling. In terms of biological role, catalyzes the release of premature peptidyl moieties from peptidyl-tRNA molecules trapped in stalled 50S ribosomal subunits, and thus maintains levels of free tRNAs and 50S ribosomes. This Mesomycoplasma hyopneumoniae (strain 232) (Mycoplasma hyopneumoniae) protein is Peptidyl-tRNA hydrolase.